We begin with the raw amino-acid sequence, 574 residues long: Pescadillo homolog (574 aa).

A disordered region spans residues 289–312; sequence PSEPNDDTEVDEFPADPENAGLEE. Over residues 292–303 the composition is skewed to acidic residues; the sequence is PNDDTEVDEFPA. One can recognise a BRCT domain in the interval 323–416; it reads KHKSLFVGLK…LLLPVEDYFP (94 aa). The segment at 452 to 486 is disordered; sequence LGLDEEDDDDDDDDEEEDDDDDEEEEDKKLRQLEN. Over residues 453 to 477 the composition is skewed to acidic residues; it reads GLDEEDDDDDDDDEEEDDDDDEEEE.

It belongs to the pescadillo family. As to quaternary structure, component of the PeBoW complex, composed of bop1, pes1 and wdr12. The complex is held together by bop1, which interacts with pes1 via its N-terminal domain and with wdr12 via a high-affinity interaction between the seven-bladed beta-propeller domains of the 2 proteins. The PeBoW complex associates with the 66S pre-ribosome.

Its subcellular location is the nucleus. It is found in the nucleolus. The protein localises to the nucleoplasm. In terms of biological role, component of the PeBoW complex, which is required for maturation of 28S and 5.8S ribosomal RNAs and formation of the 60S ribosome. Required for neural crest migration and eye development. This chain is Pescadillo homolog (pes1), found in Xenopus laevis (African clawed frog).